Here is a 100-residue protein sequence, read N- to C-terminus: NADH-quinone oxidoreductase subunit K (100 aa).

Transmembrane regions (helical) follow at residues 4-24 (LTHG…GLVI), 28-48 (LLFM…AFVV), and 60-80 (VMYI…LALL).

The protein belongs to the complex I subunit 4L family. As to quaternary structure, NDH-1 is composed of 13 different subunits. Subunits NuoA, H, J, K, L, M, N constitute the membrane sector of the complex.

It is found in the cell inner membrane. It catalyses the reaction a quinone + NADH + 5 H(+)(in) = a quinol + NAD(+) + 4 H(+)(out). In terms of biological role, NDH-1 shuttles electrons from NADH, via FMN and iron-sulfur (Fe-S) centers, to quinones in the respiratory chain. The immediate electron acceptor for the enzyme in this species is believed to be ubiquinone. Couples the redox reaction to proton translocation (for every two electrons transferred, four hydrogen ions are translocated across the cytoplasmic membrane), and thus conserves the redox energy in a proton gradient. In Enterobacter sp. (strain 638), this protein is NADH-quinone oxidoreductase subunit K.